Here is a 285-residue protein sequence, read N- to C-terminus: Polyamine aminopropyltransferase (285 aa).

In terms of domain architecture, PABS spans Glu-2–Lys-237. Gln-31 serves as a coordination point for S-methyl-5'-thioadenosine. Asp-86 lines the spermidine pocket. Residues Glu-106 and Asp-137–Ala-138 contribute to the S-methyl-5'-thioadenosine site. The Proton acceptor role is filled by Asp-155.

The protein belongs to the spermidine/spermine synthase family. In terms of assembly, homodimer or homotetramer.

The protein localises to the cytoplasm. The enzyme catalyses S-adenosyl 3-(methylsulfanyl)propylamine + putrescine = S-methyl-5'-thioadenosine + spermidine + H(+). It functions in the pathway amine and polyamine biosynthesis; spermidine biosynthesis; spermidine from putrescine: step 1/1. Functionally, catalyzes the irreversible transfer of a propylamine group from the amino donor S-adenosylmethioninamine (decarboxy-AdoMet) to putrescine (1,4-diaminobutane) to yield spermidine. The protein is Polyamine aminopropyltransferase of Lachnospira eligens (strain ATCC 27750 / DSM 3376 / VPI C15-48 / C15-B4) (Eubacterium eligens).